Consider the following 163-residue polypeptide: Nucleotide-binding protein YajQ (163 aa).

Belongs to the YajQ family.

In terms of biological role, nucleotide-binding protein. In Escherichia coli (strain K12 / DH10B), this protein is Nucleotide-binding protein YajQ.